The chain runs to 610 residues: Transducer of Cdc42-dependent actin assembly protein 2 homolog (610 aa).

Residues 1–267 (MIPVSRFFTV…EVGKIDAEGD (267 aa)) enclose the F-BAR domain. The segment at 283–315 (APFEIEDLGDPKNCDSRTNDSADGSGGKLLKSS) is disordered. Residues 291–302 (GDPKNCDSRTND) are compositionally biased toward basic and acidic residues. The region spanning 352–429 (SKPAHVRLSC…IHNLKEFYAM (78 aa)) is the REM-1 domain. A coiled-coil region spans residues 355 to 385 (AHVRLSCLRSKIRDMEKQLEQAIQGREGITR). Disordered regions lie at residues 436–487 (EGQE…SSKN) and 499–519 (LISSPKTSKSSTPTPLRRRAE). A compositionally biased stretch (basic and acidic residues) spans 437-449 (GQERSFGGRDTPD). Positions 453–464 (SMSGSSTNQSSS) are enriched in low complexity. Positions 475–487 (AGNSSSADDSSKN) are enriched in polar residues. Low complexity predominate over residues 501 to 513 (SSPKTSKSSTPTP). The SH3 domain occupies 547 to 610 (ETAVTVTALF…VPTSYLQFPQ (64 aa)).

The protein belongs to the FNBP1 family. In terms of assembly, interacts (via SH3 domain) with wsp-1 and abi-1. Interacts with cdc-42 and (via SH3 domain) with wve-1.

The protein localises to the cell junction. It is found in the cell membrane. Its subcellular location is the cytoplasmic vesicle. The protein resides in the cytoplasm. It localises to the recycling endosome. Its function is as follows. Plays a role in protein trafficking, actin organization and embryonic morphogenesis. Potentially acts as a cdc-42 effector. May play a role in egg laying. Together with toca-1, is required for protein trafficking regulating yolk protein clathrin-mediated endocytosis by oocytes during oogenesis and retrograde recycling and the sorting of recycling endosome cargo proteins such as mig-14. Also, together with toca-2, controls the distribution of actin at cell junctions. This is Transducer of Cdc42-dependent actin assembly protein 2 homolog from Caenorhabditis elegans.